The following is a 101-amino-acid chain: NADH-ubiquinone oxidoreductase chain 5 (101 aa).

3 helical membrane-spanning segments follow: residues 12-32 (IALF…SGVI), 48-68 (FLFI…FICF), and 79-99 (LVIY…LFII).

Belongs to the complex I subunit 5 family.

The protein localises to the mitochondrion inner membrane. The catalysed reaction is a ubiquinone + NADH + 5 H(+)(in) = a ubiquinol + NAD(+) + 4 H(+)(out). Its function is as follows. Core subunit of the mitochondrial membrane respiratory chain NADH dehydrogenase (Complex I) that is believed to belong to the minimal assembly required for catalysis. Complex I functions in the transfer of electrons from NADH to the respiratory chain. The immediate electron acceptor for the enzyme is believed to be ubiquinone. The chain is NADH-ubiquinone oxidoreductase chain 5 (ND5) from Leishmania tarentolae (Sauroleishmania tarentolae).